The sequence spans 325 residues: HTH-type transcriptional regulator VqsM (325 aa).

An HTH araC/xylS-type domain is found at 226–323 (QRIELFLDSI…GQSTTEFRNS (98 aa)). DNA-binding regions (H-T-H motif) lie at residues 243-264 (VTTA…ADEG) and 290-313 (VDRI…RRWT).

Transcriptional regulator involved in both the repression (at least 99 genes, such as mexR and algU) and in the activation (at least 203 genes, such as mvfR, rsaL, vqsR and rpoS) of regulatory or putative regulatory proteins which are implicated in quorum sensing, virulence and multidrug resistance. This Pseudomonas aeruginosa (strain ATCC 15692 / DSM 22644 / CIP 104116 / JCM 14847 / LMG 12228 / 1C / PRS 101 / PAO1) protein is HTH-type transcriptional regulator VqsM (vqsM).